Reading from the N-terminus, the 97-residue chain is UPF0213 protein YE0453 (97 aa).

The GIY-YIG domain maps to 4–79; it reads SLWHLYLLRT…KQLSKQQKEK (76 aa).

The protein belongs to the UPF0213 family.

The protein is UPF0213 protein YE0453 of Yersinia enterocolitica serotype O:8 / biotype 1B (strain NCTC 13174 / 8081).